The chain runs to 169 residues: Large ribosomal subunit protein uL10 (169 aa).

Belongs to the universal ribosomal protein uL10 family. In terms of assembly, part of the ribosomal stalk of the 50S ribosomal subunit. The N-terminus interacts with L11 and the large rRNA to form the base of the stalk. The C-terminus forms an elongated spine to which L12 dimers bind in a sequential fashion forming a multimeric L10(L12)X complex.

Its function is as follows. Forms part of the ribosomal stalk, playing a central role in the interaction of the ribosome with GTP-bound translation factors. In Rickettsia massiliae (strain Mtu5), this protein is Large ribosomal subunit protein uL10.